A 274-amino-acid polypeptide reads, in one-letter code: Large ribosomal subunit protein uL2c (274 aa).

Disordered stretches follow at residues 1–22 (MAIHLYKTSTPSTRNGAVDNQV) and 225–274 (PVDH…RRSK).

The protein belongs to the universal ribosomal protein uL2 family. As to quaternary structure, part of the 50S ribosomal subunit.

It is found in the plastid. Its subcellular location is the chloroplast. The chain is Large ribosomal subunit protein uL2c (rpl2) from Silene latifolia (White campion).